Reading from the N-terminus, the 378-residue chain is Protein RecA (378 aa).

Residue 79–86 participates in ATP binding; it reads GPESSGKT.

This sequence belongs to the RecA family.

It is found in the cytoplasm. In terms of biological role, can catalyze the hydrolysis of ATP in the presence of single-stranded DNA, the ATP-dependent uptake of single-stranded DNA by duplex DNA, and the ATP-dependent hybridization of homologous single-stranded DNAs. It interacts with LexA causing its activation and leading to its autocatalytic cleavage. The protein is Protein RecA of Streptococcus equi subsp. zooepidemicus (strain H70).